The following is a 234-amino-acid chain: Fibronectin type III domain-containing protein 4 (234 aa).

The N-terminal stretch at 1–44 (MPSGCHSSPPSGLRGDMASLVPLSPYLSPTVLLLVSCDLGFVRA) is a signal peptide. The Extracellular segment spans residues 45–167 (DRPPSPVNVT…GLDGERPLQT (123 aa)). The region spanning 47-140 (PPSPVNVTVT…PRVHFRTLKG (94 aa)) is the Fibronectin type-III domain. N-linked (GlcNAc...) asparagine glycans are attached at residues Asn52, Asn97, and Asn147. The tract at residues 122 to 160 (GLRGESPPGPRVHFRTLKGSDRLPSNSSSPGDITVEGLD) is disordered. The chain crosses the membrane as a helical span at residues 168 to 188 (GEVVIIVVVLLMWAAVIGLFC). Residues 189–234 (RQYDIIKDNDSNNNPKEKGKGPEQSPQGRPVGTRQKKSPSINTIDV) are Cytoplasmic-facing. Residues 197 to 209 (NDSNNNPKEKGKG) are compositionally biased toward basic and acidic residues. A disordered region spans residues 197–234 (NDSNNNPKEKGKGPEQSPQGRPVGTRQKKSPSINTIDV).

As to expression, highly expressed in the liver and the brain, including in the cortex, hypothalamus and hippocampus. Also expressed in adipose tissue.

Its subcellular location is the membrane. The protein resides in the secreted. Its function is as follows. Has anti-inflammatory properties. In the colon, acts on macrophages to down-regulate inflammation. May suppress osteoclastogenesis and mature osteoclast resorptive function. In white adipose tissue, decreases local inflammation, via interaction with GPR116. Also required for proper systemic glucose tolerance, specifically sensitizing white adipocytes to insulin and promoting glucose uptake. The insulin sensitizing function in adipose tissue is mediated by interaction with ADGRF5/GPR116 and activation of cAMP signaling. The polypeptide is Fibronectin type III domain-containing protein 4 (FNDC4) (Homo sapiens (Human)).